The following is a 294-amino-acid chain: tRNA pseudouridine synthase B (294 aa).

D39 (nucleophile) is an active-site residue.

This sequence belongs to the pseudouridine synthase TruB family. Type 1 subfamily.

It catalyses the reaction uridine(55) in tRNA = pseudouridine(55) in tRNA. Its function is as follows. Responsible for synthesis of pseudouridine from uracil-55 in the psi GC loop of transfer RNAs. This chain is tRNA pseudouridine synthase B, found in Streptococcus pyogenes serotype M3 (strain ATCC BAA-595 / MGAS315).